Here is a 1472-residue protein sequence, read N- to C-terminus: ABC transporter FGM5 (1472 aa).

Helical transmembrane passes span 32–52, 67–87, 100–120, 163–183, 197–217, 271–291, 316–336, 386–406, 412–432, 493–513, and 534–554; these read IILG…RVAT, FTKL…LILS, FAVA…ALSF, YAGV…LELQ, SPEE…IGIF, ALIV…GFQY, GLIG…ALFW, FHGL…CFLL, LAFI…TAIA, LLIM…VVAF, and LLTN…AAFV. An ABC transmembrane type-1 1 domain is found at 284–551; the sequence is IAMIGFQYAQ…MFQSVPAVIA (268 aa). Residues 605–834 enclose the ABC transporter 1 domain; it reads ISIVDGSFGW…GIYIPTLGLS (230 aa). Residue 638–645 participates in ATP binding; it reads GPVASGKS. N682, N696, N763, N784, and N843 each carry an N-linked (GlcNAc...) asparagine glycan. The next 4 membrane-spanning stretches (helical) occupy residues 900–920, 938–958, 1003–1023, and 1024–1044; these read LLSG…MGWW, LFRG…VIFM, GELP…FAMA, and VVVA…FSII. The ABC transmembrane type-1 2 domain occupies 900–1139; that stretch reads LLSGIMYAVG…VGVVAISTQL (240 aa). An N-linked (GlcNAc...) asparagine glycan is attached at N1101. Residues 1116–1136 form a helical membrane-spanning segment; that stretch reads FLATFLNLIVMVLAVGVVAIS. The ABC transporter 2 domain occupies 1218 to 1468; the sequence is YKNDDESPAS…EGSWFSQLWA (251 aa). An ATP-binding site is contributed by 1255–1262; sequence GRTGSGKS. N1277 and N1293 each carry an N-linked (GlcNAc...) asparagine glycan.

This sequence belongs to the ABC transporter superfamily. ABCC family. Conjugate transporter (TC 3.A.1.208) subfamily.

It localises to the cell membrane. It participates in secondary metabolite biosynthesis. Its function is as follows. ABC transporter; part of the Fg3_54/C64 gene cluster that mediates the biosynthesis of the octapeptide fusaoctaxin A, a virulence factor that is required for cell-to-cell invasiveness of plant host. The 2 nonribosomal peptide synthetases NRPS9 and NRPS5 form an assembly line which likely utilizes GABA as a starter unit (loaded on the unique module M1 of NRPS9) and sequentially incorporates seven extender units composed of the residues L-Ala, L-allo-Ile, L-Ser, L-Val, L-Ser, L-Leu and L-Leu, respectively. During the process, each of the residues that are tethered on modules M3-M7 of NRPS5 containing an E domain can undergo an epimerization reaction to produce a D-configuration before the transpeptidation reaction occurs. The elongation of the peptidyl chain might be terminated by module M8-mediated L-Leu incorporation, followed by R domain-catalyzed 4 electron reduction to release the resulting octapeptide from the assembly line as an alcohol. Fusaoctaxin A is cleaved by the cluster specific ABC transporter FGM5 to the pentapeptide fusapentaxin A and the tripeptide fusatrixin A. The other enzymes from the cluster, FGM1, FGM2, FGM3 and FGM9 seem not to be involved in the biosynthesis of fusaoctaxin A and their functions have still to be determined. In Gibberella zeae (strain ATCC MYA-4620 / CBS 123657 / FGSC 9075 / NRRL 31084 / PH-1) (Wheat head blight fungus), this protein is ABC transporter FGM5.